The following is a 120-amino-acid chain: Aspartate 1-decarboxylase (120 aa).

Residue serine 25 is the Schiff-base intermediate with substrate; via pyruvic acid of the active site. Pyruvic acid (Ser) is present on serine 25. Substrate is bound at residue threonine 57. Residue tyrosine 58 is the Proton donor of the active site. Residue 73–75 (GAA) participates in substrate binding.

Belongs to the PanD family. Heterooctamer of four alpha and four beta subunits. The cofactor is pyruvate. Is synthesized initially as an inactive proenzyme, which is activated by self-cleavage at a specific serine bond to produce a beta-subunit with a hydroxyl group at its C-terminus and an alpha-subunit with a pyruvoyl group at its N-terminus.

It localises to the cytoplasm. The catalysed reaction is L-aspartate + H(+) = beta-alanine + CO2. It functions in the pathway cofactor biosynthesis; (R)-pantothenate biosynthesis; beta-alanine from L-aspartate: step 1/1. Catalyzes the pyruvoyl-dependent decarboxylation of aspartate to produce beta-alanine. In Ralstonia nicotianae (strain ATCC BAA-1114 / GMI1000) (Ralstonia solanacearum), this protein is Aspartate 1-decarboxylase.